The sequence spans 519 residues: MAASCMLRSSFISPGLPQLHHQSTSKPNNGIHFFTPIKATATNDAISQQKHRRPADENIREEARRHCSSHNFSARYVPFNAGPNSDEWYSLDEIVYRSRSGGLLDVQHDMDALKKFDGQYWRSLFDSRVGKTTWPYGSGVWSKKEWVLPEIDSDDIVSAFEGNSNLFWAERFGKQFLGMTDLWVKHCGISHTGSFKDLGMTVLVSQVNRLRKMHKPVVGVGCASTGDTSAALSAYCASAGIPSIVFLPANKISMAQLVQPIANGAFVLSIDTDFDGCMQLIREVTAELPIYLANSLNSLRLEGQKTAAIEILQQFDWEVPEWVIVPGGNLGNIYAFYKGFQMCKELGLVDRIPRLVCAQAANANPLYLHYKSGWKDFKPVKANTTFASAIQIGDPVSIDRAVFALQQCNGIVEEATEEELMDAMAQADSTGMFICPHTGVALTALFKLRNSGVIAPTDRTVVVSTAHGLKFTQSKIDYHSKEIKDMECRFANPPVEVKADFGSVMDVLKSYLLSQNSKL.

The N-terminal 40 residues, Met1 to Thr40, are a transit peptide targeting the chloroplast. At Lys196 the chain carries N6-(pyridoxal phosphate)lysine. Residues Gly328 to Asn332 and Thr465 each bind pyridoxal 5'-phosphate.

Belongs to the threonine synthase family. As to quaternary structure, homodimer. Pyridoxal 5'-phosphate is required as a cofactor.

The protein localises to the plastid. It is found in the chloroplast. The enzyme catalyses O-phospho-L-homoserine + H2O = L-threonine + phosphate. It functions in the pathway amino-acid biosynthesis; L-threonine biosynthesis; L-threonine from L-aspartate: step 5/5. With respect to regulation, allosterically activated by S-adenosyl-methionine (SAM). Its function is as follows. Catalyzes the gamma-elimination of phosphate from L-phosphohomoserine and the beta-addition of water to produce L-threonine. The polypeptide is Threonine synthase, chloroplastic (Solanum tuberosum (Potato)).